The chain runs to 347 residues: Protein RecA (347 aa).

65-72 (GPESSGKT) contacts ATP. A compositionally biased stretch (basic and acidic residues) spans 327–336 (KFEPTELSRE). Positions 327 to 347 (KFEPTELSREEGDEDTLEDTM) are disordered. Over residues 337 to 347 (EGDEDTLEDTM) the composition is skewed to acidic residues.

Belongs to the RecA family.

The protein localises to the cytoplasm. Its function is as follows. Can catalyze the hydrolysis of ATP in the presence of single-stranded DNA, the ATP-dependent uptake of single-stranded DNA by duplex DNA, and the ATP-dependent hybridization of homologous single-stranded DNAs. It interacts with LexA causing its activation and leading to its autocatalytic cleavage. The sequence is that of Protein RecA from Xylella fastidiosa (strain 9a5c).